We begin with the raw amino-acid sequence, 84 residues long: Beta-cardiotoxin CTX27 (84 aa).

A signal peptide spans 1 to 21 (MKTLLLTLVVVTIVCLDLGYT). 4 disulfide bridges follow: C24–C43, C36–C61, C65–C76, and C77–C82.

The protein belongs to the three-finger toxin family. Short-chain subfamily. Aminergic toxin sub-subfamily. In terms of tissue distribution, expressed by the venom gland.

It is found in the secreted. Functionally, acts as a beta-blocker by binding to beta-1 and beta-2 adrenergic receptors (ADRB1 and ADRB2). It dose-dependently decreases the heart rate (bradycardia), whereas conventional cardiotoxins increases it. At 100 mg/kg, intraperitoneal injection into mice provokes labored breathing, impaired locomotion, lack of response to external stimuli, and death (after 30 minutes). The protein is Beta-cardiotoxin CTX27 of Ophiophagus hannah (King cobra).